Here is a 279-residue protein sequence, read N- to C-terminus: Movement protein (279 aa).

It belongs to the cucumovirus movement protein family.

The protein resides in the host cell junction. It is found in the host plasmodesma. Transports viral genome to neighboring plant cells directly through plasmosdesmata, without any budding. The movement protein allows efficient cell to cell propagation, by bypassing the host cell wall barrier. Acts by forming a tubular structure at the host plasmodesmata, enlarging it enough to allow free passage of virion capsids. This Cucumis sativus (Cucumber) protein is Movement protein.